The following is a 222-amino-acid chain: Small ribosomal subunit protein uS5 (222 aa).

The tract at residues methionine 1–lysine 41 is disordered. Positions glycine 15–lysine 41 are enriched in basic and acidic residues. The region spanning tyrosine 44 to valine 107 is the S5 DRBM domain.

The protein belongs to the universal ribosomal protein uS5 family. In terms of assembly, part of the 30S ribosomal subunit. Contacts proteins S4 and S8.

Functionally, with S4 and S12 plays an important role in translational accuracy. Its function is as follows. Located at the back of the 30S subunit body where it stabilizes the conformation of the head with respect to the body. The polypeptide is Small ribosomal subunit protein uS5 (Mycolicibacterium gilvum (strain PYR-GCK) (Mycobacterium gilvum (strain PYR-GCK))).